A 496-amino-acid chain; its full sequence is Cobyric acid synthase (496 aa).

One can recognise a GATase cobBQ-type domain in the interval 255-445 (DLEIAVLKLP…LHGLLDNGPW (191 aa)). Cys-336 (nucleophile) is an active-site residue. His-437 is an active-site residue.

The protein belongs to the CobB/CobQ family. CobQ subfamily.

Its pathway is cofactor biosynthesis; adenosylcobalamin biosynthesis. Catalyzes amidations at positions B, D, E, and G on adenosylcobyrinic A,C-diamide. NH(2) groups are provided by glutamine, and one molecule of ATP is hydrogenolyzed for each amidation. The chain is Cobyric acid synthase from Parasynechococcus marenigrum (strain WH8102).